The following is a 211-amino-acid chain: ATP phosphoribosyltransferase (211 aa).

Belongs to the ATP phosphoribosyltransferase family. Short subfamily. In terms of assembly, heteromultimer composed of HisG and HisZ subunits.

It localises to the cytoplasm. It catalyses the reaction 1-(5-phospho-beta-D-ribosyl)-ATP + diphosphate = 5-phospho-alpha-D-ribose 1-diphosphate + ATP. It participates in amino-acid biosynthesis; L-histidine biosynthesis; L-histidine from 5-phospho-alpha-D-ribose 1-diphosphate: step 1/9. Catalyzes the condensation of ATP and 5-phosphoribose 1-diphosphate to form N'-(5'-phosphoribosyl)-ATP (PR-ATP). Has a crucial role in the pathway because the rate of histidine biosynthesis seems to be controlled primarily by regulation of HisG enzymatic activity. This Pseudomonas fluorescens (strain Pf0-1) protein is ATP phosphoribosyltransferase.